We begin with the raw amino-acid sequence, 337 residues long: Anaerobic sulfite reductase subunit C (337 aa).

C115, C121, C153, C157, C180, C183, C186, C190, C212, C215, C218, and C222 together coordinate [4Fe-4S] cluster. C157 is a binding site for siroheme. 4Fe-4S ferredoxin-type domains are found at residues 171–200 (AKMRFTADRCIGCGACVKACSHHAVGCLAL) and 203–232 (GKAVKEESACIGCGECVLACPTLAWQRKPD).

The protein belongs to the nitrite and sulfite reductase 4Fe-4S domain family. In terms of assembly, the anaerobic sulfite reductase seems to consist of three subunits. The cofactor is [4Fe-4S] cluster. Siroheme is required as a cofactor.

It localises to the cytoplasm. The catalysed reaction is hydrogen sulfide + 3 NAD(+) + 3 H2O = sulfite + 3 NADH + 4 H(+). The protein operates within sulfur metabolism; sulfite reduction. This enzyme catalyzes the hydrogen sulfide production from sulfite. It is strictly anaerobic. It is regulated by electron acceptors rather than by cysteine. The sequence is that of Anaerobic sulfite reductase subunit C (asrC) from Salmonella typhi.